A 259-amino-acid chain; its full sequence is HTH-type quorum sensing-dependent transcriptional regulator VjbR (259 aa).

The segment at 76-179 (KNYFAIDPVF…AGIIHGTVCG (104 aa)) is C12-HSL binding. The HTH luxR-type domain maps to 183-248 (ANSVASLLTP…SAVATALSLG (66 aa)). A DNA-binding region (H-T-H motif) is located at residues 207-226 (DGEIAEILSIARWTVVTYLQ).

Transcriptional regulator involved in the global control of Brucella gene expression. Mediates the effects of the quorum sensing autoinducer C12-HSL (N-dodecanoyl-homoserine lactone) on a large and diverse number of genes. The sequence is that of HTH-type quorum sensing-dependent transcriptional regulator VjbR (vjbR) from Brucella ovis (strain ATCC 25840 / 63/290 / NCTC 10512).